A 94-amino-acid polypeptide reads, in one-letter code: Small ribosomal subunit protein bS18 (94 aa).

Over residues 1–12 the composition is skewed to low complexity; it reads MSEQNSRPQNSE. The disordered stretch occupies residues 1–29; that stretch reads MSEQNSRPQNSERPQRSRRPQGGPRRRRK. A compositionally biased stretch (basic residues) spans 16-29; it reads RSRRPQGGPRRRRK.

This sequence belongs to the bacterial ribosomal protein bS18 family. In terms of assembly, part of the 30S ribosomal subunit. Forms a tight heterodimer with protein bS6.

In terms of biological role, binds as a heterodimer with protein bS6 to the central domain of the 16S rRNA, where it helps stabilize the platform of the 30S subunit. This chain is Small ribosomal subunit protein bS18, found in Leuconostoc mesenteroides subsp. mesenteroides (strain ATCC 8293 / DSM 20343 / BCRC 11652 / CCM 1803 / JCM 6124 / NCDO 523 / NBRC 100496 / NCIMB 8023 / NCTC 12954 / NRRL B-1118 / 37Y).